Here is a 942-residue protein sequence, read N- to C-terminus: Mitogen-activated protein kinase kinase kinase A (942 aa).

Residues 15-96 (FIRIKCILGD…NPTKIISTKF (82 aa)) enclose the PB1 domain. Residues 107–144 (PLSSSLSPTQSLILNNNNNNNNNNNNNNNNNNNNNNNN) form a disordered region. A Protein kinase domain is found at 170 to 429 (WQKGQILGRG…ANQLLKHPFI (260 aa)). Residues 176–184 (LGRGGYGSV) and Lys-199 each bind ATP. Catalysis depends on Asp-297, which acts as the Proton acceptor. Over residues 441–486 (ISPTTTLSTNTTNTTATTTTTNNATNSNINQQQQQQQQQPPTRTQR) the composition is skewed to low complexity. Residues 441–512 (ISPTTTLSTN…ISTSTSSSSS (72 aa)) are disordered. Residues 487–498 (VSISAGSSNNKR) are compositionally biased toward polar residues. The segment covering 500–512 (TPPISTSTSSSSS) has biased composition (low complexity). Residues 513-533 (SILNNFSINIILPINLIILIF) form a helical membrane-spanning segment. The region spanning 518–564 (FSINIILPINLIILIFREIKPNFVNTLSRVCKHWKQIIDDDELWNKY) is the F-box domain. 7 WD repeats span residues 607–646 (GHDK…HHNH), 690–733 (GHSG…TLFT), 736–778 (NHQE…STLR), 780–825 (HTGG…KVRS), 828–865 (QHTE…TIST), 872–909 (RQKN…DSRS), and 912–942 (GHHE…WSID).

It belongs to the protein kinase superfamily. STE Ser/Thr protein kinase family. MAP kinase kinase kinase subfamily. Interacts with ubcB and ubpB. It depends on Mg(2+) as a cofactor. UbcB and ubpB differentially control ubiquitination/deubiquitination and degradation in a cell-type-specific and temporally regulated manner.

The protein resides in the membrane. It catalyses the reaction L-seryl-[protein] + ATP = O-phospho-L-seryl-[protein] + ADP + H(+). It carries out the reaction L-threonyl-[protein] + ATP = O-phospho-L-threonyl-[protein] + ADP + H(+). Functionally, regulates cell-type differentiation and spatial patterning, required for the proper induction and maintenance of prespore cell differentiation. The polypeptide is Mitogen-activated protein kinase kinase kinase A (Dictyostelium discoideum (Social amoeba)).